The sequence spans 385 residues: MINLHQPILGTEELDAIAEVFASNWIGLGPRTRTFEAEFAHHLGVDPEQVVFLNSGTAALFLTVQVLDLGPGDDVVLPSISFVAAANAIASSGARPVFCDVDPRTLNPTLDDVARAITPATKAVLLLHYGGSPGEVTAIADFCREKGLMLIEDSACAVASSVHGTACGTFGDLATWSFDAMKILVTGDGGMFYAADPELAHRARRLAYHGLEQMSGFDSAKSSNRWWDIRVEDIGQRLIGNDMTAALGSVQLRKLPEFINRRREIATQYDRLLSDVPGVLLPPTLPDGHVSSHYFYWVQLAPEIRDQVAQQMLERGIYTSYRYPPLHKVPIYRADCKLPSAEDACRRTLLLPLHPSLDDAEVRTVADEFQKAVEHHISQRSPLRK.

Lysine 182 is subject to N6-(pyridoxal phosphate)lysine.

The protein belongs to the DegT/DnrJ/EryC1 family. As to quaternary structure, homodimer. It depends on pyridoxal 5'-phosphate as a cofactor.

The catalysed reaction is dTDP-4-amino-2,3,4,6-tetradeoxy-alpha-D-erythro-hexopyranose + 2-oxoglutarate = dTDP-4-dehydro-2,3,6-trideoxy-alpha-D-hexopyranose + L-glutamate. Its function is as follows. Involved in the biosynthesis of forosamine ((4-dimethylamino)-2,3,4,6-tetradeoxy-alpha-D-threo-hexopyranose), a highly deoxygenated sugar component of several bioactive natural products such as the insecticidal spinosyns A and D. In the presence of pyridoxal 5'-phosphate (PLP) and alpha-ketoglutarate, catalyzes the C-4 transamination of dTDP-4-keto-2,3,6-trideoxy-alpha-D-glucose to yield dTDP-4-amino-2,3,4,6-tetradeoxy-alpha-D-glucose. It can also use pyruvate, but less efficiently than alpha-ketoglutarate. Also able to catalyze the C-4 transamination of dTDP-4-keto-2,6-dideoxy-alpha-D-glucose to yield dTDP-4-amino-2,4,6-trideoxy-D-glucose. The chain is dTDP-4-dehydro-2,3,6-trideoxy-D-glucose 4-aminotransferase from Saccharopolyspora spinosa.